Reading from the N-terminus, the 620-residue chain is 1-deoxy-D-xylulose-5-phosphate synthase (620 aa).

Thiamine diphosphate is bound by residues histidine 80 and 121-123 (GHS). Aspartate 152 lines the Mg(2+) pocket. Thiamine diphosphate contacts are provided by residues 153–154 (GA), asparagine 181, tyrosine 288, and glutamate 370. Asparagine 181 lines the Mg(2+) pocket.

Belongs to the transketolase family. DXPS subfamily. As to quaternary structure, homodimer. Mg(2+) is required as a cofactor. The cofactor is thiamine diphosphate.

The enzyme catalyses D-glyceraldehyde 3-phosphate + pyruvate + H(+) = 1-deoxy-D-xylulose 5-phosphate + CO2. It functions in the pathway metabolic intermediate biosynthesis; 1-deoxy-D-xylulose 5-phosphate biosynthesis; 1-deoxy-D-xylulose 5-phosphate from D-glyceraldehyde 3-phosphate and pyruvate: step 1/1. In terms of biological role, catalyzes the acyloin condensation reaction between C atoms 2 and 3 of pyruvate and glyceraldehyde 3-phosphate to yield 1-deoxy-D-xylulose-5-phosphate (DXP). The polypeptide is 1-deoxy-D-xylulose-5-phosphate synthase (Klebsiella pneumoniae subsp. pneumoniae (strain ATCC 700721 / MGH 78578)).